Consider the following 99-residue polypeptide: UPF0122 protein UU142 (99 aa).

It belongs to the UPF0122 family.

In terms of biological role, might take part in the signal recognition particle (SRP) pathway. This is inferred from the conservation of its genetic proximity to ftsY/ffh. May be a regulatory protein. The polypeptide is UPF0122 protein UU142 (Ureaplasma parvum serovar 3 (strain ATCC 700970)).